We begin with the raw amino-acid sequence, 223 residues long: DNA mismatch repair protein MutH (223 aa).

The protein belongs to the MutH family.

It is found in the cytoplasm. Sequence-specific endonuclease that cleaves unmethylated GATC sequences. It is involved in DNA mismatch repair. The sequence is that of DNA mismatch repair protein MutH from Haemophilus influenzae (strain 86-028NP).